A 901-amino-acid polypeptide reads, in one-letter code: Protein translocase subunit SecA (901 aa).

ATP contacts are provided by residues glutamine 89, 107 to 111 (GEGKT), and aspartate 502. The Zn(2+) site is built by cysteine 884, cysteine 886, cysteine 895, and histidine 896.

Belongs to the SecA family. In terms of assembly, monomer and homodimer. Part of the essential Sec protein translocation apparatus which comprises SecA, SecYEG and auxiliary proteins SecDF-YajC and YidC. Zn(2+) serves as cofactor.

Its subcellular location is the cell inner membrane. The protein resides in the cytoplasm. The catalysed reaction is ATP + H2O + cellular proteinSide 1 = ADP + phosphate + cellular proteinSide 2.. Its function is as follows. Part of the Sec protein translocase complex. Interacts with the SecYEG preprotein conducting channel. Has a central role in coupling the hydrolysis of ATP to the transfer of proteins into and across the cell membrane, serving both as a receptor for the preprotein-SecB complex and as an ATP-driven molecular motor driving the stepwise translocation of polypeptide chains across the membrane. The sequence is that of Protein translocase subunit SecA from Sinorhizobium fredii (strain NBRC 101917 / NGR234).